A 525-amino-acid polypeptide reads, in one-letter code: GMP synthase [glutamine-hydrolyzing] (525 aa).

The Glutamine amidotransferase type-1 domain occupies 9 to 207; that stretch reads RILILDFGSQ…VLDICACEAL (199 aa). The Nucleophile role is filled by C86. Active-site residues include H181 and E183. The 193-residue stretch at 208–400 folds into the GMPS ATP-PPase domain; sequence WTPATIIEDA…LGLPYDMLYR (193 aa). Position 235–241 (235–241) interacts with ATP; it reads SGGVDSS.

Homodimer.

The catalysed reaction is XMP + L-glutamine + ATP + H2O = GMP + L-glutamate + AMP + diphosphate + 2 H(+). The protein operates within purine metabolism; GMP biosynthesis; GMP from XMP (L-Gln route): step 1/1. Functionally, catalyzes the synthesis of GMP from XMP. This chain is GMP synthase [glutamine-hydrolyzing], found in Yersinia enterocolitica serotype O:8 / biotype 1B (strain NCTC 13174 / 8081).